The chain runs to 296 residues: Tyrosine recombinase XerC (296 aa).

In terms of domain architecture, Core-binding (CB) spans 1 to 84 (MNKIQESFLY…TLRSFYEFWM (84 aa)). The 182-residue stretch at 105 to 286 (YLPHFFYEEE…SNQQLRKVYL (182 aa)) folds into the Tyr recombinase domain. Active-site residues include R145, K169, H238, R241, and H264. The O-(3'-phospho-DNA)-tyrosine intermediate role is filled by Y273.

The protein belongs to the 'phage' integrase family. XerC subfamily. As to quaternary structure, forms a cyclic heterotetrameric complex composed of two molecules of XerC and two molecules of XerD.

It localises to the cytoplasm. Its function is as follows. Site-specific tyrosine recombinase, which acts by catalyzing the cutting and rejoining of the recombining DNA molecules. The XerC-XerD complex is essential to convert dimers of the bacterial chromosome into monomers to permit their segregation at cell division. It also contributes to the segregational stability of plasmids. The protein is Tyrosine recombinase XerC of Staphylococcus carnosus (strain TM300).